Here is a 93-residue protein sequence, read N- to C-terminus: uncharacterized protein (93 aa).

A disordered region spans residues 26-73; that stretch reads NRGTIFRPMTRNSGIVGRRGGPVAPAPFRNNVQKPGTRPPGFKPPSGV.

This is an uncharacterized protein from Caenorhabditis elegans.